A 134-amino-acid polypeptide reads, in one-letter code: Phosphoribosyl-AMP cyclohydrolase (134 aa).

Asp-77 contacts Mg(2+). A Zn(2+)-binding site is contributed by Cys-78. Asp-79 and Asp-81 together coordinate Mg(2+). 2 residues coordinate Zn(2+): Cys-95 and Cys-102.

The protein belongs to the PRA-CH family. Homodimer. The cofactor is Mg(2+). Zn(2+) serves as cofactor.

The protein resides in the cytoplasm. The catalysed reaction is 1-(5-phospho-beta-D-ribosyl)-5'-AMP + H2O = 1-(5-phospho-beta-D-ribosyl)-5-[(5-phospho-beta-D-ribosylamino)methylideneamino]imidazole-4-carboxamide. Its pathway is amino-acid biosynthesis; L-histidine biosynthesis; L-histidine from 5-phospho-alpha-D-ribose 1-diphosphate: step 3/9. Catalyzes the hydrolysis of the adenine ring of phosphoribosyl-AMP. This Pseudomonas aeruginosa (strain UCBPP-PA14) protein is Phosphoribosyl-AMP cyclohydrolase.